The chain runs to 240 residues: Tetrahydromethanopterin S-methyltransferase subunit A (240 aa).

Over 1 to 216 (MADKKAPASG…DAALIAKFNS (216 aa)) the chain is Cytoplasmic. H85 contributes to the 5-hydroxybenzimidazolylcob(I)amide binding site. The chain crosses the membrane as a helical span at residues 217–234 (GYYNGKIQGIAIGLFLSL). Residues 235–240 (LIFSLL) lie on the Extracellular side of the membrane.

It belongs to the MtrA family. In terms of assembly, the complex is composed of 8 subunits; MtrA, MtrB, MtrC, MtrD, MtrE, MtrF, MtrG and MtrH. The cofactor is 5-hydroxybenzimidazolylcob(I)amide.

The protein localises to the cell membrane. The enzyme catalyses 5-methyl-5,6,7,8-tetrahydromethanopterin + coenzyme M + 2 Na(+)(in) = 5,6,7,8-tetrahydromethanopterin + methyl-coenzyme M + 2 Na(+)(out). It participates in one-carbon metabolism; methanogenesis from CO(2); methyl-coenzyme M from 5,10-methylene-5,6,7,8-tetrahydromethanopterin: step 2/2. Functionally, part of a complex that catalyzes the formation of methyl-coenzyme M and tetrahydromethanopterin from coenzyme M and methyl-tetrahydromethanopterin. This is an energy-conserving, sodium-ion translocating step. This Methanococcus aeolicus (strain ATCC BAA-1280 / DSM 17508 / OCM 812 / Nankai-3) protein is Tetrahydromethanopterin S-methyltransferase subunit A.